Consider the following 268-residue polypeptide: Eukaryotic translation initiation factor 3 subunit G-2 (268 aa).

Residues 187–265 (SAVRISNLSE…LILCVEWSKP (79 aa)) form the RRM domain.

It belongs to the eIF-3 subunit G family. In terms of assembly, component of the eukaryotic translation initiation factor 3 (eIF-3) complex. The eIF-3 complex interacts with pix.

Its subcellular location is the cytoplasm. RNA-binding component of the eukaryotic translation initiation factor 3 (eIF-3) complex, which is involved in protein synthesis of a specialized repertoire of mRNAs and, together with other initiation factors, stimulates binding of mRNA and methionyl-tRNAi to the 40S ribosome. The eIF-3 complex specifically targets and initiates translation of a subset of mRNAs involved in cell proliferation. This subunit can bind 18S rRNA. The protein is Eukaryotic translation initiation factor 3 subunit G-2 of Drosophila willistoni (Fruit fly).